The chain runs to 268 residues: tRNA pseudouridine synthase A (268 aa).

Residue aspartate 54 is the Nucleophile of the active site. Tyrosine 112 serves as a coordination point for substrate.

Belongs to the tRNA pseudouridine synthase TruA family. Homodimer.

The catalysed reaction is uridine(38/39/40) in tRNA = pseudouridine(38/39/40) in tRNA. Formation of pseudouridine at positions 38, 39 and 40 in the anticodon stem and loop of transfer RNAs. The polypeptide is tRNA pseudouridine synthase A (Bordetella petrii (strain ATCC BAA-461 / DSM 12804 / CCUG 43448)).